A 427-amino-acid polypeptide reads, in one-letter code: Polyprenol-phosphate-mannose-dependent alpha-(1-2)-phosphatidylinositol mannoside mannosyltransferase (427 aa).

Transmembrane regions (helical) follow at residues 18-38 (LWCLLWLLAGVALGYVAWRLF), 101-121 (ASVAITVLTLVLLIASTAIVL), 143-163 (WLAVLIVAPATIWLEPISSNF), 191-211 (LMLGLGIALKLTPAVFLLYFL), 218-238 (AALTALASFAVATLLGFVLAW), 279-299 (ERFALWVAGSLLVLAATIWAM), 308-328 (PTLAVICVALFGLVVSPVSWS), 331-346 (WVWMLPAVLVIGLLGW), 351-371 (VALAMLSLAGVVLMRWTPIDL), and 386-406 (LAGMSYVWWALAVIVVAGLTV).

Belongs to the glycosyltransferase 87 family.

The protein resides in the cell membrane. The protein operates within phospholipid metabolism; phosphatidylinositol metabolism. Its function is as follows. Responsible for the addition of alpha-(1-2) mannose branches to the linear mannan core on the biosynthetic pathway to mature lipoarabinomannan (LAM). In Mycobacterium tuberculosis (strain ATCC 25618 / H37Rv), this protein is Polyprenol-phosphate-mannose-dependent alpha-(1-2)-phosphatidylinositol mannoside mannosyltransferase.